Here is a 66-residue protein sequence, read N- to C-terminus: Large ribosomal subunit protein uL29 (66 aa).

The protein belongs to the universal ribosomal protein uL29 family.

The protein is Large ribosomal subunit protein uL29 of Thermotoga neapolitana (strain ATCC 49049 / DSM 4359 / NBRC 107923 / NS-E).